The chain runs to 1478 residues: ATP-binding cassette transporter abc2 (1478 aa).

The Vacuolar segment spans residues 1–25 (MVLEQDLDPFVGGNWMNSAYKGFTF). The helical transmembrane segment at 26–46 (LSATWLAPNIYLLISGCLQYF) threads the bilayer. Over 47–65 (YEVRKRSHYFHFRRFWTIW) the chain is Cytoplasmic. Residues 66-85 (LKSLVIMVLLFTHIYDCYKT) form a helical membrane-spanning segment. Residue Asn-86 is glycosylated (N-linked (GlcNAc...) asparagine). At 86–90 (NESVW) the chain is on the vacuolar side. The helical transmembrane segment at 91 to 104 (NVLSIITYFLALFL) threads the bilayer. At 105 to 116 (HVVEQPTLRIPM) the chain is on the cytoplasmic side. The chain crosses the membrane as a helical span at residues 117–137 (ASLLMFWLFKFLASALVLLLR). Over 138-154 (PNYTMFPMLNVVPSITF) the chain is Vacuolar. Residue Asn-139 is glycosylated (N-linked (GlcNAc...) asparagine). Residues 155-175 (FCSLVCLLAEIYVPPANRVWY) traverse the membrane as a helical segment. The Cytoplasmic portion of the chain corresponds to 176-259 (PDDAAELEET…KKSSLYMWGV (84 aa)). A helical membrane pass occupies residues 260–280 (LFLNHWKLTVVIIVLKLVQDV). The region spanning 268-557 (TVVIIVLKLV…LPIVVSSVLE (290 aa)) is the ABC transmembrane type-1 1 domain. Residues 281-310 (VAFIQPNLIRKIVIFVSSYSSEHPQPPQVG) lie on the Vacuolar side of the membrane. A helical membrane pass occupies residues 311–331 (FSLAIAMFLTNVVQTALLQQY). The Cytoplasmic segment spans residues 332 to 387 (FQLGMVLGMRWRSELITAIYRKSLRLSSAARQSRSVGDIVNYMSVDTQKVCDLTMF). Residues 388 to 408 (LFVIVSGPFQIVLALTNLYHL) traverse the membrane as a helical segment. Topologically, residues 409–411 (VGY) are vacuolar. Residues 412–432 (GALSGAFVTFLLFPCNVVIAS) form a helical membrane-spanning segment. Residues 433-495 (IFKRFQNRQM…MLKKIGIVNT (63 aa)) lie on the Cytoplasmic side of the membrane. The chain crosses the membrane as a helical span at residues 496 to 516 (IGNFTWLFAPILVSAATFGTF). At 517-539 (IVLYGKTRVLSVDIVFACLSLFN) the chain is on the vacuolar side. A helical transmembrane segment spans residues 540 to 560 (LLQFPLTMLPIVVSSVLEASV). The Cytoplasmic segment spans residues 561-910 (AISRIYGFLT…VKWKVYWTYF (350 aa)). The 229-residue stretch at 593 to 821 (LEIKKGTFSW…PDSQLFQLLS (229 aa)) folds into the ABC transporter 1 domain. 631–638 (GKVGMGKS) lines the ATP pocket. Residues 828–867 (TASSTGADTPLSRSQSVITSSTDVTSSASRSSDTVSNYPK) form a disordered region. Residues 829–840 (ASSTGADTPLSR) show a composition bias toward polar residues. Phosphoserine occurs at positions 839, 843, and 863. The segment covering 841-863 (SQSVITSSTDVTSSASRSSDTVS) has biased composition (low complexity). The helical transmembrane segment at 911-931 (KACSLFLIFLYFLFIIGGIGM) threads the bilayer. Residues 918–1202 (IFLYFLFIIG…VVRQSVDVET (285 aa)) form the ABC transmembrane type-1 2 domain. Residues 932–968 (NVGTNVWLKHWSEVNTQLGYNPKPYFYLGIYTLFGLL) are Vacuolar-facing. A helical membrane pass occupies residues 969–990 (SCALISLSSLTITVFCAIKSCR). Residues 991–1033 (YLHDSMVKAVLRAPMSFFETTPTGRILNRFSSDVYRVDEVISR) lie on the Cytoplasmic side of the membrane. A helical transmembrane segment spans residues 1034–1054 (VFMFFFRNLFQIVFVLAVICY). Ser-1055 is a topological domain (vacuolar). The chain crosses the membrane as a helical span at residues 1056–1076 (SPMFMILIVPLFFLYRYNQVY). The Cytoplasmic portion of the chain corresponds to 1077–1147 (YTQTSRELKR…SSNRWQAIRV (71 aa)). The chain crosses the membrane as a helical span at residues 1148 to 1168 (EAIGALVVFSSAFFGVLSAVR). At 1169-1172 (GNPN) the chain is on the vacuolar side. Residues 1173–1193 (SGLVGLSLSYAVQITQSLTFV) traverse the membrane as a helical segment. The Cytoplasmic segment spans residues 1194 to 1478 (VRQSVDVETN…YSLAKESGLI (285 aa)). The ABC transporter 2 domain maps to 1239-1473 (IKFDHYSVRY…KASLFYSLAK (235 aa)). Residue 1273–1280 (GRTGAGKS) participates in ATP binding.

It belongs to the ABC transporter superfamily. ABCC family. Conjugate transporter (TC 3.A.1.208) subfamily.

The protein resides in the vacuole membrane. Involved in vacuolar sequestration of glutathione S-conjugates. Together with abc4, required for accumulation of a red pigment (ade pigment) in the vacuole of a mutant affected in the adenine biosynthetic pathway. This chain is ATP-binding cassette transporter abc2 (abc2), found in Schizosaccharomyces pombe (strain 972 / ATCC 24843) (Fission yeast).